Consider the following 198-residue polypeptide: FMN-dependent NADH:quinone oxidoreductase (198 aa).

FMN-binding positions include serine 10, 16–18, 94–97, and 138–141; these read SQS, MYNF, and TRGG.

This sequence belongs to the azoreductase type 1 family. In terms of assembly, homodimer. It depends on FMN as a cofactor.

It catalyses the reaction 2 a quinone + NADH + H(+) = 2 a 1,4-benzosemiquinone + NAD(+). The enzyme catalyses N,N-dimethyl-1,4-phenylenediamine + anthranilate + 2 NAD(+) = 2-(4-dimethylaminophenyl)diazenylbenzoate + 2 NADH + 2 H(+). In terms of biological role, quinone reductase that provides resistance to thiol-specific stress caused by electrophilic quinones. Also exhibits azoreductase activity. Catalyzes the reductive cleavage of the azo bond in aromatic azo compounds to the corresponding amines. The polypeptide is FMN-dependent NADH:quinone oxidoreductase (Shewanella sp. (strain ANA-3)).